The primary structure comprises 545 residues: Glucose-6-phosphate isomerase (545 aa).

Glutamate 351 functions as the Proton donor in the catalytic mechanism. Residues histidine 382 and lysine 510 contribute to the active site.

It belongs to the GPI family.

The protein localises to the cytoplasm. The enzyme catalyses alpha-D-glucose 6-phosphate = beta-D-fructose 6-phosphate. The protein operates within carbohydrate biosynthesis; gluconeogenesis. It functions in the pathway carbohydrate degradation; glycolysis; D-glyceraldehyde 3-phosphate and glycerone phosphate from D-glucose: step 2/4. In terms of biological role, catalyzes the reversible isomerization of glucose-6-phosphate to fructose-6-phosphate. The polypeptide is Glucose-6-phosphate isomerase (Shewanella baltica (strain OS195)).